A 926-amino-acid polypeptide reads, in one-letter code: Vacuolar protein sorting-associated protein 39 homolog (926 aa).

In terms of domain architecture, CNH spans 15–306; the sequence is PVEVTCLAFQ…MTLCSGARGQ (292 aa). A CHCR repeat occupies 590-768; that stretch reads DETEMARNLN…LFRTLVHPNQ (179 aa).

It belongs to the VAM6/VPS39 family. As to quaternary structure, probable core component of the homotypic fusion and vacuole protein sorting (HOPS) complex consisting of the core class C Vps proteins vps-11, vps-16, vps-18, and which further associates with vps-33.1, vps-39 and vps-41. May interact with lgg-2. Interacts with cuti-1.

It localises to the cytoplasm. The protein localises to the lysosome membrane. Its subcellular location is the late endosome membrane. The protein resides in the late endosome. It is found in the lysosome. Its function is as follows. Plays a role in vesicle-mediated protein trafficking to lysosomal compartments including the endocytic membrane transport and autophagic pathways. Believed to act in part as a component of the putative HOPS endosomal tethering complex which is proposed to be involved in the rab-5-to-rab-7 endosome conversion probably implicating sand-1, and via binding SNAREs and SNARE complexes to mediate tethering and docking events during SNARE-mediated membrane fusion. The HOPS complex is proposed to be recruited to rab-7 on the late endosomal membrane and to regulate late endocytic, phagocytic and autophagic traffic towards lysosomes. Involved in homotypic vesicle fusions between late endosomes and in heterotypic fusions between late endosomes and lysosomes. Required for fusion of endosomes. In association with lgg-2 mediates the tethering of autophagosomes with lysosomes to form autolysosomes. Within the HOPS complex, contributes to the normal development of gut granules in embryonic and adult intestinal cells. This chain is Vacuolar protein sorting-associated protein 39 homolog, found in Caenorhabditis elegans.